A 250-amino-acid polypeptide reads, in one-letter code: MADS-box protein J2 (250 aa).

Residues 1–61 (MGRGRVELKR…GKLYEFSSAS (61 aa)) enclose the MADS-box domain. The 91-residue stretch at 87-177 (TQMNYNEYVR…KNKLEESAAR (91 aa)) folds into the K-box domain.

It localises to the nucleus. MADS-box transcription factor that acts redundantly with EJ2 to control meristem maturation and inflorescence architecture. The polypeptide is MADS-box protein J2 (Solanum lycopersicum (Tomato)).